Consider the following 328-residue polypeptide: Transcription initiation factor IIE subunit beta (328 aa).

A disordered region spans residues 32–105 (QKKTNDTVIT…SSPSKKVRPG (74 aa)). A Phosphoserine modification is found at Ser-52. The span at 85–94 (LDDDDDDEDF) shows a compositional bias: acidic residues. Ser-97 and Ser-106 each carry phosphoserine. Positions 113 to 187 (QANQTDISKS…FKYLSTYDVH (75 aa)) form a DNA-binding region, TFIIE beta.

It belongs to the TFIIE beta subunit family. In terms of assembly, TFIIE is a tetramer of two alpha (TFA1) and two beta (TFA2) subunits.

Its subcellular location is the nucleus. Recruits TFIIH to the initiation complex and stimulates the RNA polymerase II C-terminal domain kinase and DNA-dependent ATPase activities of TFIIH. Both TFIIH and TFIIE are required for promoter clearance by RNA polymerase. This Saccharomyces cerevisiae (strain ATCC 204508 / S288c) (Baker's yeast) protein is Transcription initiation factor IIE subunit beta (TFA2).